The chain runs to 209 residues: uncharacterized protein (209 aa).

This is an uncharacterized protein from Acanthamoeba polyphaga mimivirus (APMV).